The following is a 768-amino-acid chain: MSASRAAELRKRLNHYAHSYHTLDTSLVSDAEYDRLFRELQSLEAADPTLISADSPTHRVGGAILEGFEKVRHRVAMLSLDNAFSAQDLVEFHRRVQEGLAESVVVEAVQHYQDEYGLSDLGALVGRPGALEGVARDVTQRLNQTLSFVEPLQPPDTKSLLSSGRKAADILRRLRLWAAEQPQRVEYVAEPKLDGLAFSLTYAEGVLVRAATRGDGQEGEDVTAHARTIQDVPLRLQGAGYPALLEVRGEVYMPLATFEKLNAEARERGEKTFANPRNAAAGSLRQLDPKITASRGLRMFCYGTGYVEGGTLADRYAEILAALKGWGLRVSPEAERVEGAQGCLAYTERLGEKRETLPYEIDGAVLKVDSQRLRERLGFVARAPRWAMAFKFPATEESTTVQAIDLQVGRTGVITPVARLEPVAVGGVTVTNATLHNFLELARKDVRVGDRVIVRRAGDVIPEVVRVIPRESHGALAVYKEPVACPVCGAPTEREGGETALRCSGGLTCRAQVKEGVKHFASRKAMNIEGLGDKLVALLMQAGLVERISDLYRLHEQRQVLVGLERLGGKSVANLLEAIEQSKAQSAARFLFGLGIRDVGVTLAGSLAAHFTSLDALMAATVEDLVGIEDVGEVVARRVVHFFAQAHHGAELAALRALGVAAAGEPWRVEPDGHGVAAAEQPLSGLSVVLTGTLAGLTREAAAVRLEGLGAKVVASVSGKTGCLVCGESAGSKLAKAQKAGVPVLDEAALEGLFRGEIPPEIQARMQG.

NAD(+) contacts are provided by residues Asp-30–Asp-34, Ser-79–Leu-80, and Glu-190. Residue Lys-192 is the N6-AMP-lysine intermediate of the active site. NAD(+) is bound by residues Arg-213, Glu-250, Lys-367, and Lys-391. Residues Cys-485, Cys-488, Cys-503, and Cys-509 each coordinate Zn(2+). A BRCT domain is found at Ala-678–Gln-767.

Belongs to the NAD-dependent DNA ligase family. LigA subfamily. It depends on Mg(2+) as a cofactor. Requires Mn(2+) as cofactor.

It catalyses the reaction NAD(+) + (deoxyribonucleotide)n-3'-hydroxyl + 5'-phospho-(deoxyribonucleotide)m = (deoxyribonucleotide)n+m + AMP + beta-nicotinamide D-nucleotide.. In terms of biological role, DNA ligase that catalyzes the formation of phosphodiester linkages between 5'-phosphoryl and 3'-hydroxyl groups in double-stranded DNA using NAD as a coenzyme and as the energy source for the reaction. It is essential for DNA replication and repair of damaged DNA. The sequence is that of DNA ligase from Magnetococcus marinus (strain ATCC BAA-1437 / JCM 17883 / MC-1).